Reading from the N-terminus, the 142-residue chain is Pro-opiomelanocortin (142 aa).

Residues 1–8 constitute a propeptide that is removed on maturation; that stretch reads SEPGRREG. Residue valine 23 is modified to Valine amide. Serine 41 carries the post-translational modification Phosphoserine.

It belongs to the POMC family. In terms of processing, specific enzymatic cleavages at paired basic residues yield the different active peptides. ACTH and MSH are produced by the pituitary gland.

Its subcellular location is the secreted. In terms of biological role, stimulates the adrenal glands to release cortisol. Anorexigenic peptide. Increases the pigmentation of skin by increasing melanin production in melanocytes. Its function is as follows. Increases the pigmentation of skin by increasing melanin production in melanocytes. Functionally, endogenous orexigenic opiate. In terms of biological role, endogenous opiate. The protein is Pro-opiomelanocortin (POMC) of Neovison vison (American mink).